The primary structure comprises 386 residues: Chaperone protein DnaJ (386 aa).

In terms of domain architecture, J spans 6–71 (DYYEILGVDR…QKRARYDQFG (66 aa)). The CR-type zinc finger occupies 144 to 226 (GTEKEVTVSR…CGGKGRVRKH (83 aa)). Cysteine 157, cysteine 160, cysteine 174, cysteine 177, cysteine 200, cysteine 203, cysteine 214, and cysteine 217 together coordinate Zn(2+). CXXCXGXG motif repeat units follow at residues 157-164 (CPTCSGSG), 174-181 (CRQCNGTG), 200-207 (CDVCHGEG), and 214-221 (CETCGGKG).

It belongs to the DnaJ family. In terms of assembly, homodimer. Requires Zn(2+) as cofactor.

Its subcellular location is the cytoplasm. In terms of biological role, participates actively in the response to hyperosmotic and heat shock by preventing the aggregation of stress-denatured proteins and by disaggregating proteins, also in an autonomous, DnaK-independent fashion. Unfolded proteins bind initially to DnaJ; upon interaction with the DnaJ-bound protein, DnaK hydrolyzes its bound ATP, resulting in the formation of a stable complex. GrpE releases ADP from DnaK; ATP binding to DnaK triggers the release of the substrate protein, thus completing the reaction cycle. Several rounds of ATP-dependent interactions between DnaJ, DnaK and GrpE are required for fully efficient folding. Also involved, together with DnaK and GrpE, in the DNA replication of plasmids through activation of initiation proteins. This is Chaperone protein DnaJ from Acetivibrio thermocellus (strain ATCC 27405 / DSM 1237 / JCM 9322 / NBRC 103400 / NCIMB 10682 / NRRL B-4536 / VPI 7372) (Clostridium thermocellum).